Consider the following 335-residue polypeptide: 4-hydroxy-3-methylbut-2-enyl diphosphate reductase (335 aa).

[4Fe-4S] cluster is bound at residue Cys14. His43 and His81 together coordinate (2E)-4-hydroxy-3-methylbut-2-enyl diphosphate. Residues His43 and His81 each contribute to the dimethylallyl diphosphate site. Isopentenyl diphosphate is bound by residues His43 and His81. Cys103 provides a ligand contact to [4Fe-4S] cluster. A (2E)-4-hydroxy-3-methylbut-2-enyl diphosphate-binding site is contributed by His132. Residue His132 coordinates dimethylallyl diphosphate. His132 contacts isopentenyl diphosphate. The active-site Proton donor is Glu134. Residue Thr179 coordinates (2E)-4-hydroxy-3-methylbut-2-enyl diphosphate. [4Fe-4S] cluster is bound at residue Cys209. The (2E)-4-hydroxy-3-methylbut-2-enyl diphosphate site is built by Ser237, Ser238, Asn239, and Ser285. Dimethylallyl diphosphate contacts are provided by Ser237, Ser238, Asn239, and Ser285. The isopentenyl diphosphate site is built by Ser237, Ser238, Asn239, and Ser285.

It belongs to the IspH family. It depends on [4Fe-4S] cluster as a cofactor.

The enzyme catalyses isopentenyl diphosphate + 2 oxidized [2Fe-2S]-[ferredoxin] + H2O = (2E)-4-hydroxy-3-methylbut-2-enyl diphosphate + 2 reduced [2Fe-2S]-[ferredoxin] + 2 H(+). The catalysed reaction is dimethylallyl diphosphate + 2 oxidized [2Fe-2S]-[ferredoxin] + H2O = (2E)-4-hydroxy-3-methylbut-2-enyl diphosphate + 2 reduced [2Fe-2S]-[ferredoxin] + 2 H(+). Its pathway is isoprenoid biosynthesis; dimethylallyl diphosphate biosynthesis; dimethylallyl diphosphate from (2E)-4-hydroxy-3-methylbutenyl diphosphate: step 1/1. It functions in the pathway isoprenoid biosynthesis; isopentenyl diphosphate biosynthesis via DXP pathway; isopentenyl diphosphate from 1-deoxy-D-xylulose 5-phosphate: step 6/6. Catalyzes the conversion of 1-hydroxy-2-methyl-2-(E)-butenyl 4-diphosphate (HMBPP) into a mixture of isopentenyl diphosphate (IPP) and dimethylallyl diphosphate (DMAPP). Acts in the terminal step of the DOXP/MEP pathway for isoprenoid precursor biosynthesis. The protein is 4-hydroxy-3-methylbut-2-enyl diphosphate reductase of Deinococcus radiodurans (strain ATCC 13939 / DSM 20539 / JCM 16871 / CCUG 27074 / LMG 4051 / NBRC 15346 / NCIMB 9279 / VKM B-1422 / R1).